The chain runs to 231 residues: Cell cycle transcriptional regulator CtrA (231 aa).

Residues 2 to 116 (RVLLIEDDSA…EMIARIHAVV (115 aa)) enclose the Response regulatory domain. Position 51 is a 4-aspartylphosphate (D51). A DNA-binding region (ompR/PhoB-type) is located at residues 124–223 (QSVIKTGDIV…VWGRGYVLRD (100 aa)).

Post-translationally, phosphorylated by CckA.

Functionally, forms part of a two-component regulatory system CtrA/CckA that controls multiple events in the cell cycle, including cell division, stalk synthesis and cell cycle-specific transcription. Binds to a group of cell cycle-regulated promoters critical for DNA replication, DNA methylation, and class II flagellar biogenesis. In Caulobacter vibrioides (strain ATCC 19089 / CIP 103742 / CB 15) (Caulobacter crescentus), this protein is Cell cycle transcriptional regulator CtrA (ctrA).